Here is an 873-residue protein sequence, read N- to C-terminus: Probable inorganic carbon transporter subunit DabA (873 aa).

Zn(2+) is bound by residues Cys393, Asp395, His575, and Cys590.

The protein belongs to the inorganic carbon transporter (TC 9.A.2) DabA family. As to quaternary structure, forms a complex with DabB. The cofactor is Zn(2+).

It is found in the cell membrane. Its function is as follows. Part of an energy-coupled inorganic carbon pump. The sequence is that of Probable inorganic carbon transporter subunit DabA from Bacillus licheniformis (strain ATCC 14580 / DSM 13 / JCM 2505 / CCUG 7422 / NBRC 12200 / NCIMB 9375 / NCTC 10341 / NRRL NRS-1264 / Gibson 46).